The sequence spans 286 residues: MAIPFLHKGGSDDSTHHHTHDYDHHNHDHHGHDHHSHDSSSNSSSEAARLQFIQEHGHSHDAMETPGSYLKRELPQFNHRDFSRRAFTIGVGGPVGSGKTALLLQLCRLLGEKYSIGVVTNDIFTREDQEFLIRNKALPEERIRAIETGGCPHAAIREDVSGNLVALEELQSEFNTELLLVESGGDNLAANYSRDLADFIIYVIDVSGGDKIPRKGGPGITESDLLIINKTDLAKLVGADLSVMDRDAKKIRENGPIVFAQVKNQVGMDEITELILGAAKSAGALK.

A disordered region spans residues 1 to 47 (MAIPFLHKGGSDDSTHHHTHDYDHHNHDHHGHDHHSHDSSSNSSSEA). Basic and acidic residues predominate over residues 9 to 26 (GGSDDSTHHHTHDYDHHN). 93-100 (GPVGSGKT) is a binding site for GTP.

It belongs to the SIMIBI class G3E GTPase family. UreG subfamily.

The protein localises to the cytoplasm. It is found in the nucleus. In terms of biological role, probably facilitates nickel incorporation. This is an uncharacterized protein from Schizosaccharomyces pombe (strain 972 / ATCC 24843) (Fission yeast).